A 483-amino-acid polypeptide reads, in one-letter code: Glutamyl-tRNA(Gln) amidotransferase subunit A (483 aa).

Residues Lys-76 and Ser-151 each act as charge relay system in the active site. Residue Ser-175 is the Acyl-ester intermediate of the active site.

It belongs to the amidase family. GatA subfamily. In terms of assembly, heterotrimer of A, B and C subunits.

It carries out the reaction L-glutamyl-tRNA(Gln) + L-glutamine + ATP + H2O = L-glutaminyl-tRNA(Gln) + L-glutamate + ADP + phosphate + H(+). Its function is as follows. Allows the formation of correctly charged Gln-tRNA(Gln) through the transamidation of misacylated Glu-tRNA(Gln) in organisms which lack glutaminyl-tRNA synthetase. The reaction takes place in the presence of glutamine and ATP through an activated gamma-phospho-Glu-tRNA(Gln). The polypeptide is Glutamyl-tRNA(Gln) amidotransferase subunit A (Nitrosospira multiformis (strain ATCC 25196 / NCIMB 11849 / C 71)).